Reading from the N-terminus, the 69-residue chain is Large ribosomal subunit protein bL31 (69 aa).

Zn(2+) is bound by residues cysteine 16, cysteine 18, cysteine 37, and cysteine 40.

Belongs to the bacterial ribosomal protein bL31 family. Type A subfamily. Part of the 50S ribosomal subunit. Zn(2+) serves as cofactor.

In terms of biological role, binds the 23S rRNA. This chain is Large ribosomal subunit protein bL31, found in Buchnera aphidicola subsp. Cinara cedri (strain Cc).